The chain runs to 231 residues: 3-oxoadipate CoA-transferase subunit A (231 aa).

CoA is bound at residue 25–31 (GGFGTAG).

The protein belongs to the 3-oxoacid CoA-transferase subunit A family. As to quaternary structure, heterodimer.

The catalysed reaction is 3-oxoadipate + succinyl-CoA = 3-oxoadipyl-CoA + succinate. It functions in the pathway aromatic compound metabolism; beta-ketoadipate pathway; acetyl-CoA and succinyl-CoA from 3-oxoadipate: step 1/2. This is 3-oxoadipate CoA-transferase subunit A (pcaI) from Pseudomonas putida (Arthrobacter siderocapsulatus).